Reading from the N-terminus, the 626-residue chain is MEGAADQTTKALSELAMDSSTTLNAAESSAGDGAGPRSKNALKKEQKMKQKEEEKRRKDEEKAEKAKQAPKASSQKAVAADDEEMDATQYYENRLKYLAAEKAKGENPYPHKFAVSMSIPKYIETYGSLNNGDHVENAEESLAGRIMSKRSSSSKLFFYDLHGDDFKVQVMADASKSGLDEAEFLKLHSNAKRGDIVGVIGFPGKTKRGELSIFPRSFILLSHCLHMMPRKADNVNAKKPEIWVPGQTRNPEAYVLKDQESRYRQRHLDMILNVEVRQIFRTRAKIISYVRRFLDNKNFLEVETPMMNMIAGGAAARPFVTHHNDLDMRLYMRIAPELYLKQLIVGGLERVYEIGKQFRNEGIDLTHNPEFTTCEFYMAFADYNDLMEMTEVMLSGMVKELTGGYKIKYNANGYDKDPIEIDFTPPFRRIEMIGELEKVAKLNIPKDLASEEANKYLIDACARFDVKCPPPQTTARLLDKLVGEFLEPTCVNPTFIINQPEIMSPLAKWHRSKSGLTERFELFINKHELCNAYTELNDPVVQRQRFADQLKDRQSGDDEAMALDETFCNALEYGLAPTGGWGLGIDRLSMLLTDSLNIKEVLFFPAMRPPQEESAAAQAPLTEEKK.

Residue Met-1 is modified to N-acetylmethionine. 2 stretches are compositionally biased toward polar residues: residues 1 to 11 (MEGAADQTTKA) and 18 to 27 (DSSTTLNAAE). The tract at residues 1-84 (MEGAADQTTK…QKAVAADDEE (84 aa)) is disordered. Residues 37-69 (RSKNALKKEQKMKQKEEEKRRKDEEKAEKAKQA) adopt a coiled-coil conformation. Residues 42–67 (LKKEQKMKQKEEEKRRKDEEKAEKAK) are compositionally biased toward basic and acidic residues. A compositionally biased stretch (low complexity) spans 69–78 (APKASSQKAV). Residues 141–217 (SLAGRIMSKR…RGELSIFPRS (77 aa)) constitute a DNA-binding region (OB). Residues Gly-313 and Glu-337 each coordinate substrate. Residues 359–361 (RNE) and 367–368 (HN) contribute to the ATP site. Substrate contacts are provided by Glu-375 and Tyr-377. Positions 521 and 528 each coordinate Ca(2+). ATP is bound at residue 528–529 (EL). Substrate-binding residues include Asn-531 and Glu-535. 584-587 (GIDR) serves as a coordination point for ATP.

Belongs to the class-II aminoacyl-tRNA synthetase family. Ca(2+) serves as cofactor.

The protein resides in the cytoplasm. It is found in the cytosol. The enzyme catalyses tRNA(Lys) + L-lysine + ATP = L-lysyl-tRNA(Lys) + AMP + diphosphate. Catalyzes the specific attachment of an amino acid to its cognate tRNA in a 2 step reaction: the amino acid (AA) is first activated by ATP to form AA-AMP and then transferred to the acceptor end of the tRNA. Promotes aminoacylation of non-cognate tRNAs and translational recoding of lysine at nonsense codons. The chain is Lysine--tRNA ligase, cytoplasmic from Arabidopsis thaliana (Mouse-ear cress).